Reading from the N-terminus, the 809-residue chain is Leucine--tRNA ligase (809 aa).

The short motif at 40–50 (PYPSGRIHMGH) is the 'HIGH' region element. The 'KMSKS' region signature appears at 579-583 (KMSKS). Lysine 582 serves as a coordination point for ATP.

It belongs to the class-I aminoacyl-tRNA synthetase family.

It is found in the cytoplasm. The catalysed reaction is tRNA(Leu) + L-leucine + ATP = L-leucyl-tRNA(Leu) + AMP + diphosphate. The protein is Leucine--tRNA ligase of Campylobacter jejuni (strain RM1221).